Consider the following 170-residue polypeptide: Phosphopantetheine adenylyltransferase (170 aa).

Residue T10 participates in substrate binding. ATP is bound by residues 10–11 and H18; that span reads TF. Positions 42, 79, and 93 each coordinate substrate. Residues 94 to 96, E104, and 129 to 135 each bind ATP; these read GLR and TQFISST.

The protein belongs to the bacterial CoaD family. Homohexamer. Mg(2+) serves as cofactor.

Its subcellular location is the cytoplasm. The enzyme catalyses (R)-4'-phosphopantetheine + ATP + H(+) = 3'-dephospho-CoA + diphosphate. Its pathway is cofactor biosynthesis; coenzyme A biosynthesis; CoA from (R)-pantothenate: step 4/5. Reversibly transfers an adenylyl group from ATP to 4'-phosphopantetheine, yielding dephospho-CoA (dPCoA) and pyrophosphate. The protein is Phosphopantetheine adenylyltransferase of Parvibaculum lavamentivorans (strain DS-1 / DSM 13023 / NCIMB 13966).